A 137-amino-acid polypeptide reads, in one-letter code: Interferon-induced transmembrane protein 3 (137 aa).

The Cytoplasmic segment spans residues 1–57; sequence MNHTSQAFITAASGGQPPNYERIKEEYEVAEMGAPHGSASVRTTVINMPREVSVPDH. The residue at position 20 (Tyr-20) is a Phosphotyrosine. Lys-24 is covalently cross-linked (Glycyl lysine isopeptide (Lys-Gly) (interchain with G-Cter in ubiquitin)). Tyr-27 bears the Phosphotyrosine mark. The segment at residues 58-78 is an intramembrane region (helical); that stretch reads VVWSLFNTLFMNFCCLGFIAY. An interaction with SPP1 region spans residues 60-93; that stretch reads WSLFNTLFMNFCCLGFIAYAYSVKSRDRKMVGDV. S-palmitoyl cysteine attachment occurs at residues Cys-71 and Cys-72. Residues 79–109 are Cytoplasmic-facing; that stretch reads AYSVKSRDRKMVGDVTGAQAYASTAKCLNIS. Residues Lys-83, Lys-88, and Lys-104 each participate in a glycyl lysine isopeptide (Lys-Gly) (interchain with G-Cter in ubiquitin) cross-link. Residue Cys-105 is the site of S-palmitoyl cysteine attachment. Residues 108–133 are interaction with VAPA; it reads ISTLVLSILMVVITIVSVIIIVLNAQ. Residues 110–130 traverse the membrane as a helical segment; sequence TLVLSILMVVITIVSVIIIVL. Residues 131-137 are Extracellular-facing; sequence NAQNLHT.

The protein belongs to the CD225/Dispanin family. Interacts with ATP6V0B. Interacts with CD81. Interacts with SPP1; the interaction reduces OPN expression. Interacts with BRI3. Post-translationally, polyubiquitinated with both 'Lys-48' and 'Lys-63' linkages. Ubiquitination negatively regulates antiviral activity. Lys-24 is the most prevalent ubiquitination site. Phosphorylation at Tyr-20 is required for endosomal and lysosomal location. In terms of tissue distribution, expressed in acinar cell. Predominantly expressed in nascent primordial germ cells, as well as in gonadal germ cells.

It is found in the cell membrane. The protein resides in the late endosome membrane. Its subcellular location is the early endosome membrane. The protein localises to the lysosome membrane. It localises to the cytoplasm. It is found in the perinuclear region. In terms of biological role, IFN-induced antiviral protein which disrupts intracellular cholesterol homeostasis. Inhibits the entry of viruses to the host cell cytoplasm by preventing viral fusion with cholesterol depleted endosomes. May inactivate new enveloped viruses which buds out of the infected cell, by letting them go out with a cholesterol depleted membrane. Active against multiple viruses, including influenza A virus, SARS coronaviruses (SARS-CoV and SARS-CoV-2), Marburg virus (MARV), Ebola virus (EBOV), Dengue virus (DNV), West Nile virus (WNV), human immunodeficiency virus type 1 (HIV-1), hepatitis C virus (HCV) and vesicular stomatitis virus (VSV). Can inhibit: influenza virus hemagglutinin protein-mediated viral entry, MARV and EBOV GP1,2-mediated viral entry, SARS-CoV and SARS-CoV-2 S protein-mediated viral entry and VSV G protein-mediated viral entry. Plays a critical role in the structural stability and function of vacuolar ATPase (v-ATPase). Establishes physical contact with the v-ATPase of endosomes which is critical for proper clathrin localization and is also required for the function of the v-ATPase to lower the pH in phagocytic endosomes thus establishing an antiviral state. In hepatocytes, IFITM proteins act in a coordinated manner to restrict HCV infection by targeting the endocytosed HCV virion for lysosomal degradation. IFITM2 and IFITM3 display anti-HCV activity that may complement the anti-HCV activity of IFITM1 by inhibiting the late stages of HCV entry, possibly in a coordinated manner by trapping the virion in the endosomal pathway and targeting it for degradation at the lysosome. Exerts opposing activities on SARS-CoV-2, including amphipathicity-dependent restriction of virus at endosomes and amphipathicity-independent enhancement of infection at the plasma membrane. The protein is Interferon-induced transmembrane protein 3 of Mus musculus (Mouse).